A 115-amino-acid polypeptide reads, in one-letter code: Pancreatic progenitor cell differentiation and proliferation factor B (115 aa).

Residues 21–48 (IGSTSSSSSCGSSEYSGEVIPHHPGLPK) form a disordered region. The segment covering 22–37 (GSTSSSSSCGSSEYSG) has biased composition (low complexity).

It belongs to the PPDPF family.

Its function is as follows. Probable regulator of exocrine pancreas development. The polypeptide is Pancreatic progenitor cell differentiation and proliferation factor B (ppdpfb) (Danio rerio (Zebrafish)).